Here is a 353-residue protein sequence, read N- to C-terminus: MTAILERRESESLWGRFCNWITSTENRLYIGWFGVLMIPTLLTATSVFIIAFIAAPPVDIDGIREPVSGSLLYGNNIISGAIIPTSAAIGLHFYPIWEAASVDEWLYNGGPYELIVLHFLLGVACYMGREWELSFRLGMRPWIAVAYSAPVAAATAVFLIYPIGQGSFSDGMPLGISGTFNFMIVFQAEHNILMHPFHMLGVAGVFGGSLFSAMHGSLVTSSLIRETTENESANEGYRFGQEEETYNIVAAHGYFGRLIFQYAGFNNSRSLHFFLAAWPVVGIWFTALGISTMAFNLNGFNFNQSVVDSQGRVINTWADIINRANLGMEVMHERNAHNFPLDLAAVEAPSING.

N-acetylthreonine is present on T2. T2 carries the post-translational modification Phosphothreonine. The next 3 helical transmembrane spans lie at 29-46 (YIGWFGVLMIPTLLTATS), 118-133 (HFLLGVACYMGREWEL), and 142-156 (WIAVAYSAPVAAATA). Residue H118 participates in chlorophyll a binding. A pheophytin a-binding site is contributed by Y126. The [CaMn4O5] cluster site is built by D170 and E189. Residues 197–218 (FHMLGVAGVFGGSLFSAMHGSL) traverse the membrane as a helical segment. H198 serves as a coordination point for chlorophyll a. H215 contacts a quinone. The Fe cation site is built by H215 and H272. Residues 274-288 (FLAAWPVVGIWFTAL) form a helical membrane-spanning segment. 4 residues coordinate [CaMn4O5] cluster: H332, E333, D342, and A344. A propeptide spanning residues 345–353 (AVEAPSING) is cleaved from the precursor.

The protein belongs to the reaction center PufL/M/PsbA/D family. PSII is composed of 1 copy each of membrane proteins PsbA, PsbB, PsbC, PsbD, PsbE, PsbF, PsbH, PsbI, PsbJ, PsbK, PsbL, PsbM, PsbT, PsbX, PsbY, PsbZ, Psb30/Ycf12, at least 3 peripheral proteins of the oxygen-evolving complex and a large number of cofactors. It forms dimeric complexes. The D1/D2 heterodimer binds P680, chlorophylls that are the primary electron donor of PSII, and subsequent electron acceptors. It shares a non-heme iron and each subunit binds pheophytin, quinone, additional chlorophylls, carotenoids and lipids. D1 provides most of the ligands for the Mn4-Ca-O5 cluster of the oxygen-evolving complex (OEC). There is also a Cl(-1) ion associated with D1 and D2, which is required for oxygen evolution. The PSII complex binds additional chlorophylls, carotenoids and specific lipids. serves as cofactor. In terms of processing, tyr-161 forms a radical intermediate that is referred to as redox-active TyrZ, YZ or Y-Z. Post-translationally, C-terminally processed by CTPA; processing is essential to allow assembly of the oxygen-evolving complex and thus photosynthetic growth.

The protein localises to the plastid. It is found in the chloroplast thylakoid membrane. It catalyses the reaction 2 a plastoquinone + 4 hnu + 2 H2O = 2 a plastoquinol + O2. Photosystem II (PSII) is a light-driven water:plastoquinone oxidoreductase that uses light energy to abstract electrons from H(2)O, generating O(2) and a proton gradient subsequently used for ATP formation. It consists of a core antenna complex that captures photons, and an electron transfer chain that converts photonic excitation into a charge separation. The D1/D2 (PsbA/PsbD) reaction center heterodimer binds P680, the primary electron donor of PSII as well as several subsequent electron acceptors. In Brassica napus (Rape), this protein is Photosystem II protein D1.